We begin with the raw amino-acid sequence, 983 residues long: Receptor-like protein 19 (983 aa).

The signal sequence occupies residues 1–25 (MMKGYITLSFLIILIFNFLDEFAAS). Residues 26-937 (TRHLCDPDQS…EEDEEEVISW (912 aa)) lie on the Extracellular side of the membrane. 2 N-linked (GlcNAc...) asparagine glycosylation sites follow: Asn-66 and Asn-102. LRR repeat units follow at residues 82-108 (FGDVIELDLSFSCLRGQLNSNSSLFRL), 111-135 (LRFLTTLDLSNNDFIGQIPSSLETL), 136-159 (SNLTTLDLSRNHFSGRIPSSIGNL), 161-183 (HLIFVDFSHNNFSGQIPSSLGYL), 184-207 (SHLTSFNLSYNNFSGRVPSSIGNL), 209-231 (YLTTLRLSRNSFFGELPSSLGSL), 232-255 (FHLTDLILDTNHFVGKIPSSLGNL), 256-281 (SHLTSIDLHKNNFVGEIPFSLGNLSC), 283-302 (TSFILSDNNIVGEIPSSFGN), 303-327 (LNQLDILNVKSNKLSGSFPIALLNL), 328-351 (RKLSTLSLFNNRLTGTLPSNMSSL), 353-375 (NLKLFDATENHFTGPLPSSLFNI), 376-399 (PSLKTITLENNQLNGSLGFGNISS), 401-424 (SNLTVLRLGNNNFRGPIHRSISKL), 425-448 (VNLKELDLSNYNTQGLVDFTIFSH), 450-474 (KSIEYLNLSHLNTTTTIDMYEILSS), 475-498 (FKLLDTLDLSGSHVSTTNKSSLSN), 501-524 (LVLISQLYLSGCGITEFPKFLRSQ), 525-548 (ELMLTLDISNNKIKGQVPGWLWML), 550-571 (VLNYVNLSNNTFIGFERSTKLG), 578-602 (PPAMRQLFCSNNNFTGNIPSFICEL), 603-628 (PYLSTLDFSNNKFNGSIPTCMGNIQS), 629-652 (PYLQALNLRHNRLSGLLPENIFES), 654-674 (ISLDVGHNQLVGKLPRSLSHI), 675-700 (SSLGLLNVESNKISDTFPLWLSSLQE), 702-720 (QVLVLRSNAFYGPIEKTQF), 721-744 (SKLRIIDISGNQFNGTLPANFFVN), 793-817 (LKVFTVIDFSGNKFEGEIPKSIGLL), 818-840 (KELHVLNLSNNALSGHIASSMGN), 841-865 (LMALESLDVSQNKLSGEIPQELGKL), and 867-890 (YLAYMNFSHNQLVGLLPGGTQFQT). Residues Asn-137, Asn-158, Asn-171, Asn-190, Asn-195, and Asn-206 are each glycosylated (N-linked (GlcNAc...) asparagine). Asn-254 and Asn-278 each carry an N-linked (GlcNAc...) asparagine glycan. N-linked (GlcNAc...) asparagine glycosylation is present at Asn-347. Asn-389, Asn-396, and Asn-402 each carry an N-linked (GlcNAc...) asparagine glycan. N-linked (GlcNAc...) asparagine glycans are attached at residues Asn-456, Asn-461, Asn-492, and Asn-498. 4 N-linked (GlcNAc...) asparagine glycosylation sites follow: Asn-555, Asn-558, Asn-590, and Asn-616. N-linked (GlcNAc...) asparagine glycans are attached at residues Asn-734 and Asn-744. N-linked (GlcNAc...) asparagine glycosylation occurs at Asn-824. A glycan (N-linked (GlcNAc...) asparagine) is linked at Asn-872. A helical transmembrane segment spans residues 938–958 (IAAVIGFILGTALGLTFGCIL). Topologically, residues 959–983 (FSYKPDWFKNPFVRDKRRNIGTITH) are cytoplasmic.

This sequence belongs to the RLP family.

It localises to the cell membrane. The sequence is that of Receptor-like protein 19 from Arabidopsis thaliana (Mouse-ear cress).